The following is a 309-amino-acid chain: Probable lipid kinase YegS-like (309 aa).

The 134-residue stretch at 1 to 134 folds into the DAGKc domain; the sequence is MAPSHWRLIL…VDLLRIDAEH (134 aa). ATP contacts are provided by residues threonine 39, 65–71, and threonine 96; that span reads GDGTLSE. Residues valine 219, aspartate 222, and leucine 224 each coordinate Mg(2+). Glutamate 280 (proton acceptor) is an active-site residue.

Belongs to the diacylglycerol/lipid kinase family. YegS lipid kinase subfamily. Requires Mg(2+) as cofactor. Ca(2+) is required as a cofactor.

The protein resides in the cytoplasm. In terms of biological role, probably phosphorylates lipids; the in vivo substrate is unknown. The sequence is that of Probable lipid kinase YegS-like from Xanthomonas oryzae pv. oryzae (strain MAFF 311018).